Consider the following 2364-residue polypeptide: Cytotoxin-L (2364 aa).

The segment at 1 to 91 (MNLVNKAQLQ…EVLELKNNSL (91 aa)) is four-helical bundle. The GT44 domain occupies 96–468 (KNLHFIWIGG…APDVRSTINL (373 aa)). The glucosyltransferase region stretch occupies residues 96 to 468 (KNLHFIWIGG…APDVRSTINL (373 aa)). UDP-alpha-D-glucose-binding positions include 101 to 103 (IWI), Asn-139, 265 to 270 (LAAASD), and 286 to 288 (DVD). Mg(2+) contacts are provided by Asp-288, Glu-515, and Ser-518. 518–520 (SLW) lines the UDP-alpha-D-glucose pocket. Positions 544–799 (GEDDNLDFAQ…KSKYLHELST (256 aa)) are autoprocessing region. Glu-545 and Asp-546 together coordinate Zn(2+). The Peptidase C80 domain occupies 567-774 (LSSMKTRNKE…EESIIKDISS (208 aa)). 1D-myo-inositol hexakisphosphate contacts are provided by Tyr-577, Lys-600, and Lys-647. His-653 provides a ligand contact to Zn(2+). The active-site For protease activity is the His-653. The active-site Nucleophile; for protease activity is the Cys-698. His-757 is a Zn(2+) binding site. Residues Lys-764, Lys-775, and Lys-792 each coordinate 1D-myo-inositol hexakisphosphate. The translocation region stretch occupies residues 800–1500 (LLQEIRNNAN…ESIIRNIYMP (701 aa)). 5 interaction with host SEMA6A and SEMA6B regions span residues 1433 to 1438 (CMKLIE), 1466 to 1471 (DNETKY), 1484 to 1495 (FTAEFSNESIIR), 1504 to 1511 (NLFIYSSK), and 1596 to 1601 (YNNLDP). Cell wall-binding repeat units lie at residues 1813 to 1832 (EFGL…FGNM), 1833 to 1852 (VSGL…PKNN), 1854 to 1873 (ITGF…TKSG), 1876 to 1895 (SIGE…QGIL), 1926 to 1945 (FIGK…NYRA), 1946 to 1965 (AVEW…KTGE), 1967 to 1986 (LKGL…NGIM), 1987 to 2006 (QTGF…DGVM), 2007 to 2026 (QVGY…NGER), 2057 to 2076 (YNGI…SNTA), 2077 to 2097 (VVGW…NRAE), 2099 to 2118 (CIGL…NGIR), 2119 to 2138 (QLGF…SGKI), 2139 to 2158 (ELGY…SGLV), 2209 to 2224 (ETGW…YFDP), 2227 to 2249 (KKAY…NGIM), 2250 to 2269 (RTGL…DGKM), 2270 to 2289 (QFGY…DGKM), 2320 to 2339 (YTGW…EYIA), and 2340 to 2359 (ATGS…DTAE). The receptor-binding (CROPS) region stretch occupies residues 1835-2364 (GLIYINDSLY…PDTAELVVSE (530 aa)).

Belongs to the clostridial glucosylating toxin (LCGT) family. As to quaternary structure, homomultimer; forms an inactive homomultimer at pH 8, which dissociates at pH 4, leading to cytotoxicity. Interacts with host SEMA6A; interaction promotes toxin entry into host cell. Interacts with host SEMA6B; interaction promotes toxin entry into host cell. Requires Zn(2+) as cofactor. Mn(2+) serves as cofactor. The cofactor is Mg(2+). Undergoes autocatalytic cleavage to release the N-terminal part (Glucosyltransferase TcsL), which constitutes the active part of the toxin, in the host cytosol. 1D-myo-inositol hexakisphosphate-binding (InsP6) activates the peptidase C80 domain and promotes autoprocessing.

It localises to the secreted. It is found in the host endosome membrane. The protein resides in the host cytoplasm. Its subcellular location is the host cytosol. The protein localises to the host cell membrane. The catalysed reaction is L-threonyl-[protein] + UDP-alpha-D-glucose = 3-O-(alpha-D-glucosyl)-L-threonyl-[protein] + UDP + H(+). Protease activity is activated upon binding to 1D-myo-inositol hexakisphosphate (InsP6), which induces conformational reorganization. Functionally, precursor of a cytotoxin that targets the vascular endothelium, inducing an anti-inflammatory effect and resulting in lethal toxic shock syndrome. TcsL constitutes the main toxin that mediates the pathology of P.sordellii infection, an anaerobic Gram-positive bacterium found in soil and in the gastrointestinal and vaginal tracts of animals and humans; although the majority of carriers are asymptomatic, pathogenic P.sordellii infections arise rapidly and are highly lethal. This form constitutes the precursor of the toxin: it enters into host cells and mediates autoprocessing to release the active toxin (Glucosyltransferase TcsL) into the host cytosol. Targets vascular endothelium by binding to the semaphorin proteins SEMA6A and SEMA6B, and enters host cells via clathrin-mediated endocytosis. Once entered into host cells, acidification in the endosome promotes the membrane insertion of the translocation region and formation of a pore, leading to translocation of the GT44 and peptidase C80 domains across the endosomal membrane. This activates the peptidase C80 domain and autocatalytic processing, releasing the N-terminal part (Glucosyltransferase TcsL), which constitutes the active part of the toxin, in the cytosol. Active form of the toxin, which is released into the host cytosol following autoprocessing and inactivates small GTPases. Acts by mediating monoglucosylation of small GTPases of the Ras (H-Ras/HRAS, K-Ras/KRAS, N-Ras/NRAS and Ral/RALA) family in host cells at the conserved threonine residue located in the switch I region ('Thr-37/35'), using UDP-alpha-D-glucose as the sugar donor. Also able to catalyze monoglucosylation of some members of the Rho family (Rac1 and Rap2A), but with less efficiency than with Ras proteins. Monoglucosylation of host small GTPases completely prevents the recognition of the downstream effector, blocking the GTPases in their inactive form and leading to apoptosis. Induces an anti-inflammatory effect, mainly by inactivating Ras proteins which results in blockage of the cell cycle and killing of immune cells. The absence or moderate local inflammatory response allows C.sordellii spreading in deep tissues, production of toxin which is released in the general circulation and causes a toxic shock syndrome. This chain is Cytotoxin-L, found in Paraclostridium sordellii (Clostridium sordellii).